A 232-amino-acid chain; its full sequence is Phosphatidylserine decarboxylase proenzyme (232 aa).

Ser190 acts as the Schiff-base intermediate with substrate; via pyruvic acid in catalysis. Residue Ser190 is modified to Pyruvic acid (Ser); by autocatalysis.

Belongs to the phosphatidylserine decarboxylase family. PSD-A subfamily. In terms of assembly, heterodimer of a large membrane-associated beta subunit and a small pyruvoyl-containing alpha subunit. Requires pyruvate as cofactor. Is synthesized initially as an inactive proenzyme. Formation of the active enzyme involves a self-maturation process in which the active site pyruvoyl group is generated from an internal serine residue via an autocatalytic post-translational modification. Two non-identical subunits are generated from the proenzyme in this reaction, and the pyruvate is formed at the N-terminus of the alpha chain, which is derived from the carboxyl end of the proenzyme. The post-translation cleavage follows an unusual pathway, termed non-hydrolytic serinolysis, in which the side chain hydroxyl group of the serine supplies its oxygen atom to form the C-terminus of the beta chain, while the remainder of the serine residue undergoes an oxidative deamination to produce ammonia and the pyruvoyl prosthetic group on the alpha chain.

The protein resides in the cell membrane. It catalyses the reaction a 1,2-diacyl-sn-glycero-3-phospho-L-serine + H(+) = a 1,2-diacyl-sn-glycero-3-phosphoethanolamine + CO2. The protein operates within phospholipid metabolism; phosphatidylethanolamine biosynthesis; phosphatidylethanolamine from CDP-diacylglycerol: step 2/2. Its function is as follows. Catalyzes the formation of phosphatidylethanolamine (PtdEtn) from phosphatidylserine (PtdSer). In Allorhizobium ampelinum (strain ATCC BAA-846 / DSM 112012 / S4) (Agrobacterium vitis (strain S4)), this protein is Phosphatidylserine decarboxylase proenzyme.